We begin with the raw amino-acid sequence, 443 residues long: Phosphoglucosamine mutase (443 aa).

Residue S102 is the Phosphoserine intermediate of the active site. Positions 102, 241, 243, and 245 each coordinate Mg(2+). The residue at position 102 (S102) is a Phosphoserine.

Belongs to the phosphohexose mutase family. Mg(2+) serves as cofactor. Activated by phosphorylation.

It carries out the reaction alpha-D-glucosamine 1-phosphate = D-glucosamine 6-phosphate. Catalyzes the conversion of glucosamine-6-phosphate to glucosamine-1-phosphate. The sequence is that of Phosphoglucosamine mutase from Polaromonas sp. (strain JS666 / ATCC BAA-500).